We begin with the raw amino-acid sequence, 418 residues long: Adenosylhomocysteinase (418 aa).

The substrate site is built by Thr-53, Asp-125, and Glu-150. Position 151–153 (151–153) interacts with NAD(+); sequence TTT. Lys-180 and Asp-184 together coordinate substrate. Residues Asn-185, 214 to 219, Glu-237, Asn-272, 293 to 295, and Asn-340 each bind NAD(+); these read GYGWCG and SGH.

It belongs to the adenosylhomocysteinase family. The cofactor is NAD(+).

The protein resides in the cytoplasm. The catalysed reaction is S-adenosyl-L-homocysteine + H2O = L-homocysteine + adenosine. It participates in amino-acid biosynthesis; L-homocysteine biosynthesis; L-homocysteine from S-adenosyl-L-homocysteine: step 1/1. Functionally, may play a key role in the regulation of the intracellular concentration of adenosylhomocysteine. The sequence is that of Adenosylhomocysteinase from Aquifex aeolicus (strain VF5).